The following is a 345-amino-acid chain: tRNA N6-adenosine threonylcarbamoyltransferase (345 aa).

2 residues coordinate Fe cation: His113 and His117. Substrate is bound by residues 142–146 (AISGG), Asp175, Gly188, Asp192, and Asn282. Asp310 contributes to the Fe cation binding site.

This sequence belongs to the KAE1 / TsaD family. Fe(2+) serves as cofactor.

Its subcellular location is the cytoplasm. The enzyme catalyses L-threonylcarbamoyladenylate + adenosine(37) in tRNA = N(6)-L-threonylcarbamoyladenosine(37) in tRNA + AMP + H(+). Its function is as follows. Required for the formation of a threonylcarbamoyl group on adenosine at position 37 (t(6)A37) in tRNAs that read codons beginning with adenine. Is involved in the transfer of the threonylcarbamoyl moiety of threonylcarbamoyl-AMP (TC-AMP) to the N6 group of A37, together with TsaE and TsaB. TsaD likely plays a direct catalytic role in this reaction. The protein is tRNA N6-adenosine threonylcarbamoyltransferase of Bdellovibrio bacteriovorus (strain ATCC 15356 / DSM 50701 / NCIMB 9529 / HD100).